The primary structure comprises 519 residues: Transmembrane protein 180 (519 aa).

Over 1-11 (MGLDWPQAWLL) the chain is Extracellular. The helical transmembrane segment at 12 to 43 (GLPIAVVYGSLALFTSILHNVFLLYYVDTFVS) threads the bilayer. At 44–55 (VYKINKVSFWVG) the chain is on the cytoplasmic side. The helical transmembrane segment at 56–74 (ETVFLLWNSFNDPLFGWLS) threads the bilayer. The Extracellular segment spans residues 75–100 (DRQLLSSQPRSGAGLSSRDVVLTRVR). Residues 101-118 (ALGWHGPLLALSFLAFWV) traverse the membrane as a helical segment. The Cytoplasmic segment spans residues 119–126 (PWAPAGLQ). A helical membrane pass occupies residues 127 to 151 (FLLCLCLYDGFLTLVDLHHHALLAD). Residues 152 to 155 (LALS) are Extracellular-facing. The chain crosses the membrane as a helical span at residues 156-179 (SHDRTHLNFYCSLFSAAGSLSVFA). The Cytoplasmic portion of the chain corresponds to 180–191 (SYAFWNKEDFSS). The helical transmembrane segment at 192 to 223 (FRAFCVVLAAGSGLGFLGTTQLLKRQIEATRR) threads the bilayer. The Extracellular portion of the chain corresponds to 224 to 264 (DRGCPGLDLDGGVCEEEPPVGGEEAGNITLGQYLRQLARHQ). N250 carries an N-linked (GlcNAc...) asparagine glycan. A helical transmembrane segment spans residues 265–292 (NFLWFVGMDLVQVFHCHFNSNFFPLFLE). At 293-305 (HLLSDHISLSTGS) the chain is on the cytoplasmic side. Residues 306–325 (FLLGISYVAPHLNNLYFLPL) form a helical membrane-spanning segment. The Extracellular portion of the chain corresponds to 326-330 (CRRWG). Residues 331-350 (VYAVVRGLFLLKLSLSLLML) traverse the membrane as a helical segment. Residues 351–358 (LAGPDHPG) are Cytoplasmic-facing. The helical transmembrane segment at 359–393 (LLCFFIASNRVFTEGTCKLLTLVVTDLVDEDLVLN) threads the bilayer. Topologically, residues 394 to 402 (HRKQAASAL) are extracellular. Residues 403–429 (LFGMVALVTKPGQTFAPLLGTWLLCFY) form a helical membrane-spanning segment. Over 430 to 468 (TGHDLFQQSPMTPVGSVRPWPELPAPAPAPAQAPTLRQG) the chain is Cytoplasmic. A helical transmembrane segment spans residues 469–487 (CFYLLVFVPITCALLQLFT). Topologically, residues 488–519 (WSQFTLHGRRLRTVKAQRQNLAQIHTLNIKMV) are extracellular.

Its subcellular location is the cell membrane. This Mus musculus (Mouse) protein is Transmembrane protein 180.